A 540-amino-acid chain; its full sequence is CUB domain-containing protein 2 (540 aa).

Residues Met-1–Ala-22 form the signal peptide. Residues Gln-23–Asp-516 lie on the Extracellular side of the membrane. Disulfide bonds link Cys-30-Cys-56, Cys-83-Cys-106, Cys-145-Cys-171, Cys-198-Cys-218, Cys-257-Cys-283, and Cys-314-Cys-336. CUB domains are found at residues Cys-30–Asp-143, Cys-145–Gly-255, and Cys-257–Val-373. Asn-40 carries N-linked (GlcNAc...) asparagine glycosylation. The N-linked (GlcNAc...) asparagine glycan is linked to Asn-267. N-linked (GlcNAc...) asparagine glycosylation is found at Asn-377, Asn-435, and Asn-436. The helical transmembrane segment at Ile-517–Leu-537 threads the bilayer. Residues Met-538 to Leu-540 are Cytoplasmic-facing.

The protein resides in the membrane. This chain is CUB domain-containing protein 2 (CDCP2), found in Homo sapiens (Human).